Consider the following 195-residue polypeptide: Dual-action ribosomal maturation protein DarP (195 aa).

Belongs to the DarP family.

The protein resides in the cytoplasm. Functionally, member of a network of 50S ribosomal subunit biogenesis factors which assembles along the 30S-50S interface, preventing incorrect 23S rRNA structures from forming. Promotes peptidyl transferase center (PTC) maturation. This is Dual-action ribosomal maturation protein DarP from Stenotrophomonas maltophilia (strain K279a).